A 111-amino-acid chain; its full sequence is UPF0060 membrane protein Krad_3114 (111 aa).

4 helical membrane-spanning segments follow: residues 7–27 (IALFVLAALLEIGGAWLVWQG), 33–53 (GLAWIGAGVIALGLYGFAATL), 62–82 (VLAAYGGVFVAGSLLWAAVVD), and 88–108 (RFDVAGALVCLVGVGIVMYAP).

It belongs to the UPF0060 family.

It localises to the cell membrane. This Kineococcus radiotolerans (strain ATCC BAA-149 / DSM 14245 / SRS30216) protein is UPF0060 membrane protein Krad_3114.